Reading from the N-terminus, the 202-residue chain is Recombination protein RecR (202 aa).

A C4-type zinc finger spans residues 61–76; that stretch reads CARCNSFTEDEVCATC. Positions 84–179 constitute a Toprim domain; sequence GLLCIVETPA…KVTRLARGVP (96 aa).

It belongs to the RecR family.

Its function is as follows. May play a role in DNA repair. It seems to be involved in an RecBC-independent recombinational process of DNA repair. It may act with RecF and RecO. In Bordetella bronchiseptica (strain ATCC BAA-588 / NCTC 13252 / RB50) (Alcaligenes bronchisepticus), this protein is Recombination protein RecR.